A 361-amino-acid chain; its full sequence is MTQITPQPGIMDIALYEGGASKVDGLDTVIKLSSNENPLGPSPAAIAAYKAAAGELHRYPSTDHAGLRGAIAEVYGLDPERIICGAGSDEIIAFLCQAYVGPGDEVIHTEHGFAMYRISTLAAGGTPVEVPERERVTDVDAILAGVTDRTRLVFIANPNNPTGTMIGGNALARLADGLPEGCLLVLDGAYAEYVPDYDAGKALVESRENVVMTRTFSKIYGLGALRVGWGYGPRHVIDVLNRVRGPFNLSTGALAAAEAAVRDRAYTETCRAENAKWRGWLASELAALGIPSDTSSANFVLARFASPEEAGACDDFLKARGIIVRRVSGYKLPAALRMTVGDAEGCRALVDAVAAFKAQAA.

Lys218 carries the N6-(pyridoxal phosphate)lysine modification.

Belongs to the class-II pyridoxal-phosphate-dependent aminotransferase family. Histidinol-phosphate aminotransferase subfamily. As to quaternary structure, homodimer. It depends on pyridoxal 5'-phosphate as a cofactor.

It carries out the reaction L-histidinol phosphate + 2-oxoglutarate = 3-(imidazol-4-yl)-2-oxopropyl phosphate + L-glutamate. Its pathway is amino-acid biosynthesis; L-histidine biosynthesis; L-histidine from 5-phospho-alpha-D-ribose 1-diphosphate: step 7/9. The polypeptide is Histidinol-phosphate aminotransferase (Dinoroseobacter shibae (strain DSM 16493 / NCIMB 14021 / DFL 12)).